The following is a 570-amino-acid chain: Protein translocase subunit SecD (570 aa).

Residues 104–117 (GANATGTPSASETG) show a composition bias toward polar residues. Residues 104 to 198 (GANATGTPSA…SASASGDDAT (95 aa)) form a disordered region. Residues 122–146 (KATDKATDKATDKATDGDKATDGDK) are compositionally biased toward basic and acidic residues. Composition is skewed to low complexity over residues 147–161 (ASGT…SATS) and 172–196 (ADPS…SGDD). 5 helical membrane-spanning segments follow: residues 370–390 (AGLI…LFYY), 395–415 (FIAV…MALL), 419–439 (IGFA…GITA), 474–494 (ILVS…VTVG), and 498–518 (GFAF…FLFT). The disordered stretch occupies residues 540–570 (LDPKALGAKPPLRRTRRPSRPAAGPVDPKEA).

It belongs to the SecD/SecF family. SecD subfamily. In terms of assembly, forms a complex with SecF. Part of the essential Sec protein translocation apparatus which comprises SecA, SecYEG and auxiliary proteins SecDF. Other proteins may also be involved.

It is found in the cell membrane. In terms of biological role, part of the Sec protein translocase complex. Interacts with the SecYEG preprotein conducting channel. SecDF uses the proton motive force (PMF) to complete protein translocation after the ATP-dependent function of SecA. The sequence is that of Protein translocase subunit SecD from Streptomyces coelicolor (strain ATCC BAA-471 / A3(2) / M145).